The primary structure comprises 430 residues: Trigger factor (430 aa).

A PPIase FKBP-type domain is found at 163–248; it reads GNIAIIDFKG…IKDIKVKELP (86 aa).

This sequence belongs to the FKBP-type PPIase family. Tig subfamily.

Its subcellular location is the cytoplasm. The catalysed reaction is [protein]-peptidylproline (omega=180) = [protein]-peptidylproline (omega=0). Its function is as follows. Involved in protein export. Acts as a chaperone by maintaining the newly synthesized protein in an open conformation. Functions as a peptidyl-prolyl cis-trans isomerase. This chain is Trigger factor, found in Clostridium botulinum (strain Loch Maree / Type A3).